Reading from the N-terminus, the 400-residue chain is Iron(III) enterobactin esterase (400 aa).

The protein belongs to the Fes family.

The protein localises to the cytoplasm. It carries out the reaction Fe(III)-enterobactin + 3 H2O + H(+) = Fe(III)-[N-(2,3-dihydroxybenzoyl)-L-serine] + 2 N-(2,3-dihydroxybenzoyl)-L-serine. The enzyme catalyses Fe(III)-enterobactin + H2O = Fe(III)-[N-(2,3-dihydroxybenzoyl)-L-serine]3 + H(+). It catalyses the reaction Fe(III)-[N-(2,3-dihydroxybenzoyl)-L-serine]3 + H2O + H(+) = Fe(III)-[N-(2,3-dihydroxybenzoyl)-L-serine]2 + N-(2,3-dihydroxybenzoyl)-L-serine. The catalysed reaction is Fe(III)-[N-(2,3-dihydroxybenzoyl)-L-serine]2 + H2O + H(+) = Fe(III)-[N-(2,3-dihydroxybenzoyl)-L-serine] + N-(2,3-dihydroxybenzoyl)-L-serine. It carries out the reaction enterobactin + 3 H2O = 3 N-(2,3-dihydroxybenzoyl)-L-serine + 2 H(+). Functionally, catalyzes the hydrolysis of ferric enterobactin (Fe-Ent). Is responsible for the release of iron from ferric enterobactin. Also catalyzes the hydrolysis of iron-free enterobactin (Ent). Hydrolyzes ferric monoglucosyl-C-Ent (Fe-MGE) poorly and does not hydrolyze ferric diglucosyl-C-Ent (Fe-DGE) or ferric triglucosyl-C-Ent (Fe-TGE) at all. Also hydrolyzes apo MGE, but catalyzes the hydrolysis of apo DGE very poorly, and does not process apo TGE at all. The catalytic efficiency for processing Fe-Ent is much higher than that for apo Ent, suggesting that Fe-Ent is the physiological substrate. The chain is Iron(III) enterobactin esterase from Escherichia coli O6:H1 (strain CFT073 / ATCC 700928 / UPEC).